The sequence spans 340 residues: Glyceraldehyde-3-phosphate dehydrogenase (340 aa).

Residues 11-12 and Gly109 each bind NAD(+); that span reads TI. 138-140 is a D-glyceraldehyde 3-phosphate binding site; sequence SCN. Cys139 (nucleophile) is an active-site residue. Arg167 contacts NAD(+). D-glyceraldehyde 3-phosphate is bound at residue 193 to 194; it reads HA. Gln300 lines the NAD(+) pocket.

It belongs to the glyceraldehyde-3-phosphate dehydrogenase family. Homotetramer.

It is found in the cytoplasm. The enzyme catalyses D-glyceraldehyde 3-phosphate + phosphate + NADP(+) = (2R)-3-phospho-glyceroyl phosphate + NADPH + H(+). The catalysed reaction is D-glyceraldehyde 3-phosphate + phosphate + NAD(+) = (2R)-3-phospho-glyceroyl phosphate + NADH + H(+). It functions in the pathway carbohydrate degradation; glycolysis; pyruvate from D-glyceraldehyde 3-phosphate: step 1/5. This chain is Glyceraldehyde-3-phosphate dehydrogenase, found in Saccharolobus islandicus (strain L.S.2.15 / Lassen #1) (Sulfolobus islandicus).